Here is a 249-residue protein sequence, read N- to C-terminus: Small ribosomal subunit protein uS3y (249 aa).

The region spanning 21-92 (LNEVLTRELA…SVELYAEKVN (72 aa)) is the KH type-2 domain. At serine 212 the chain carries Phosphoserine.

It belongs to the universal ribosomal protein uS3 family.

This is Small ribosomal subunit protein uS3y (RPS3B) from Arabidopsis thaliana (Mouse-ear cress).